Here is a 390-residue protein sequence, read N- to C-terminus: LL-diaminopimelate aminotransferase 2 (390 aa).

Y13 and G38 together coordinate substrate. Residues Y67, 102-103 (SK), Y127, N177, Y208, and 236-238 (SLS) contribute to the pyridoxal 5'-phosphate site. Substrate-binding residues include K103, Y127, and N177. K239 carries the N6-(pyridoxal phosphate)lysine modification. Residue R247 participates in pyridoxal 5'-phosphate binding. Residue R365 participates in substrate binding.

The protein belongs to the class-I pyridoxal-phosphate-dependent aminotransferase family. LL-diaminopimelate aminotransferase subfamily. In terms of assembly, homodimer. Pyridoxal 5'-phosphate serves as cofactor.

The enzyme catalyses (2S,6S)-2,6-diaminopimelate + 2-oxoglutarate = (S)-2,3,4,5-tetrahydrodipicolinate + L-glutamate + H2O + H(+). It functions in the pathway amino-acid biosynthesis; L-lysine biosynthesis via DAP pathway; LL-2,6-diaminopimelate from (S)-tetrahydrodipicolinate (aminotransferase route): step 1/1. Functionally, involved in the synthesis of meso-diaminopimelate (m-DAP or DL-DAP), required for both lysine and peptidoglycan biosynthesis. Catalyzes the direct conversion of tetrahydrodipicolinate to LL-diaminopimelate. In Nostoc sp. (strain PCC 7120 / SAG 25.82 / UTEX 2576), this protein is LL-diaminopimelate aminotransferase 2.